We begin with the raw amino-acid sequence, 164 residues long: Protein SprT (164 aa).

In terms of domain architecture, SprT-like spans 14–156 (QQAETFFKRP…LCKRCRETLV (143 aa)). Histidine 69 contributes to the Zn(2+) binding site. Glutamate 70 is a catalytic residue. Histidine 73 provides a ligand contact to Zn(2+).

Belongs to the SprT family. The cofactor is Zn(2+).

It is found in the cytoplasm. The chain is Protein SprT from Pseudomonas putida (strain W619).